The sequence spans 204 residues: LexA repressor (204 aa).

Positions 31-51 form a DNA-binding region, H-T-H motif; it reads VREIGQAVGLKSSSTVHTHLV. Active-site for autocatalytic cleavage activity residues include serine 128 and lysine 165.

Belongs to the peptidase S24 family. As to quaternary structure, homodimer.

The catalysed reaction is Hydrolysis of Ala-|-Gly bond in repressor LexA.. Represses a number of genes involved in the response to DNA damage (SOS response), including recA and lexA. In the presence of single-stranded DNA, RecA interacts with LexA causing an autocatalytic cleavage which disrupts the DNA-binding part of LexA, leading to derepression of the SOS regulon and eventually DNA repair. The chain is LexA repressor from Syntrophomonas wolfei subsp. wolfei (strain DSM 2245B / Goettingen).